A 753-amino-acid chain; its full sequence is Ribosome biogenesis protein BOP1 homolog (753 aa).

Positions 1-155 (MTKRSKGANE…RNTVGNVPLK (155 aa)) are disordered. Composition is skewed to basic and acidic residues over residues 7–18 (GANEDKLIETKS) and 30–41 (KPVEAESLKEED). Composition is skewed to acidic residues over residues 64–75 (DDFDSDFSDSED) and 83–109 (EDGDVEFSDDDDVLEHDGSIDNEDDDG). The segment covering 110 to 121 (SEHVGSDNNEEH) has biased composition (basic and acidic residues). Over residues 122-142 (GSDEDSERGEAVEESDSSEDE) the composition is skewed to acidic residues. WD repeat units lie at residues 421–462 (GHTG…KVWQ), 464–502 (DEAIMCVAWNPLSRLPVLAVAMGRDLFFLNTELGTDEEQ), 539–581 (RHFK…TQRL), 626–665 (TGLREISSMAIHPGGDNLIVGSKEGKMCWFDMDLSSKPYK), 669–708 (NHPKDITNVAVHRSYPLFASCSEDSTAYVFHGMVYNDLNQ), and 722–753 (SSKGGVLDCKFHPRQPWLFTAGADSIIKLYCH).

Belongs to the WD repeat BOP1/ERB1 family. Interacts with PES. Interacts with WDR12.

The protein localises to the nucleus. It is found in the nucleolus. Its subcellular location is the nucleoplasm. Functionally, required for maturation of ribosomal RNAs and formation of the large ribosomal subunit. Plays an essential role in cell growth and survival through its regulation of ribosome biogenesis and mitotic progression. The chain is Ribosome biogenesis protein BOP1 homolog from Arabidopsis thaliana (Mouse-ear cress).